The following is a 104-amino-acid chain: Co-chaperonin GroES 2 (104 aa).

It belongs to the GroES chaperonin family. In terms of assembly, heptamer of 7 subunits arranged in a ring. Interacts with the chaperonin GroEL.

The protein localises to the cytoplasm. Functionally, together with the chaperonin GroEL, plays an essential role in assisting protein folding. The GroEL-GroES system forms a nano-cage that allows encapsulation of the non-native substrate proteins and provides a physical environment optimized to promote and accelerate protein folding. GroES binds to the apical surface of the GroEL ring, thereby capping the opening of the GroEL channel. The protein is Co-chaperonin GroES 2 of Rhodopseudomonas palustris (strain ATCC BAA-98 / CGA009).